The chain runs to 475 residues: Ribulose bisphosphate carboxylase large chain (475 aa).

Substrate is bound by residues Asn123 and Thr173. Lys175 functions as the Proton acceptor in the catalytic mechanism. Substrate is bound at residue Lys177. Residues Lys201, Asp203, and Glu204 each contribute to the Mg(2+) site. Lys201 is subject to N6-carboxylysine. Catalysis depends on His294, which acts as the Proton acceptor. Arg295, His327, and Ser379 together coordinate substrate.

This sequence belongs to the RuBisCO large chain family. Type I subfamily. Heterohexadecamer of 8 large chains and 8 small chains. Mg(2+) serves as cofactor.

It localises to the plastid. It is found in the chloroplast. The catalysed reaction is 2 (2R)-3-phosphoglycerate + 2 H(+) = D-ribulose 1,5-bisphosphate + CO2 + H2O. It carries out the reaction D-ribulose 1,5-bisphosphate + O2 = 2-phosphoglycolate + (2R)-3-phosphoglycerate + 2 H(+). In terms of biological role, ruBisCO catalyzes two reactions: the carboxylation of D-ribulose 1,5-bisphosphate, the primary event in carbon dioxide fixation, as well as the oxidative fragmentation of the pentose substrate in the photorespiration process. Both reactions occur simultaneously and in competition at the same active site. In Bigelowiella natans (Pedinomonas minutissima), this protein is Ribulose bisphosphate carboxylase large chain.